Reading from the N-terminus, the 217-residue chain is Serine acetyltransferase (217 aa).

This sequence belongs to the transferase hexapeptide repeat family.

Its subcellular location is the cytoplasm. The catalysed reaction is L-serine + acetyl-CoA = O-acetyl-L-serine + CoA. It functions in the pathway amino-acid biosynthesis; L-cysteine biosynthesis; L-cysteine from L-serine: step 1/2. With respect to regulation, inhibited by cysteine. Catalyzes the acetylation of serine by acetyl-CoA to produce O-acetylserine (OAS). In Bacillus subtilis (strain 168), this protein is Serine acetyltransferase (cysE).